The primary structure comprises 149 residues: Urease accessory protein UreE (149 aa).

It belongs to the UreE family.

Its subcellular location is the cytoplasm. Involved in urease metallocenter assembly. Binds nickel. Probably functions as a nickel donor during metallocenter assembly. This chain is Urease accessory protein UreE, found in Prochlorococcus marinus (strain MIT 9215).